Reading from the N-terminus, the 440-residue chain is Deoxyguanosinetriphosphate triphosphohydrolase-like protein (440 aa).

Residues 62–255 (RLTHSLEAAQ…MELADDIAYG (194 aa)) enclose the HD domain.

The protein belongs to the dGTPase family. Type 2 subfamily.

The chain is Deoxyguanosinetriphosphate triphosphohydrolase-like protein from Vibrio parahaemolyticus serotype O3:K6 (strain RIMD 2210633).